A 168-amino-acid chain; its full sequence is G/U mismatch-specific DNA glycosylase (168 aa).

The protein belongs to the uracil-DNA glycosylase (UDG) superfamily. TDG/mug family. As to quaternary structure, binds DNA as a monomer.

Its subcellular location is the cytoplasm. The catalysed reaction is Specifically hydrolyzes mismatched double-stranded DNA and polynucleotides, releasing free uracil.. In terms of biological role, excises ethenocytosine and uracil, which can arise by alkylation or deamination of cytosine, respectively, from the corresponding mispairs with guanine in ds-DNA. It is capable of hydrolyzing the carbon-nitrogen bond between the sugar-phosphate backbone of the DNA and the mispaired base. The complementary strand guanine functions in substrate recognition. Required for DNA damage lesion repair in stationary-phase cells. The chain is G/U mismatch-specific DNA glycosylase from Shigella dysenteriae serotype 1 (strain Sd197).